Reading from the N-terminus, the 249-residue chain is uncharacterized protein (249 aa).

Residue 11-34 (IFGGRSQIGGELARRLAAGATMVL) participates in NADP(+) binding. Ser-142 serves as a coordination point for substrate. Residue Tyr-155 is the Proton acceptor of the active site.

Belongs to the short-chain dehydrogenases/reductases (SDR) family.

This is an uncharacterized protein from Mycobacterium tuberculosis (strain CDC 1551 / Oshkosh).